Reading from the N-terminus, the 872-residue chain is Metabotropic glutamate receptor 2 (872 aa).

The first 18 residues, 1-18, serve as a signal peptide directing secretion; that stretch reads MESLLRFLALLLLRGAVA. Over 19–568 the chain is Extracellular; that stretch reads EGPAKKVLTL…EYIRWGDAWA (550 aa). The cysteines at positions 50 and 92 are disulfide-linked. Positions 57, 61, 145, 166, and 168 each coordinate L-glutamate. N-linked (GlcNAc...) asparagine glycosylation is found at Asn-203 and Asn-286. Cystine bridges form between Cys-234/Cys-518, Cys-355/Cys-362, Cys-400/Cys-407, Cys-500/Cys-519, Cys-504/Cys-522, Cys-525/Cys-537, and Cys-540/Cys-553. Asp-295 lines the L-glutamate pocket. Asn-338 is a glycosylation site (N-linked (GlcNAc...) asparagine). An L-glutamate-binding site is contributed by Lys-377. N-linked (GlcNAc...) asparagine glycosylation is present at Asn-402. Asn-547 is a glycosylation site (N-linked (GlcNAc...) asparagine). Residues 569–589 form a helical membrane-spanning segment; that stretch reads VGPVTIACLGALATLFVLGVF. Over 590–604 the chain is Cytoplasmic; sequence VRHNATPVVKASGRE. Residues 605 to 625 form a helical membrane-spanning segment; sequence LCYILLGGVFLCYCMTFIFIA. Over 626-633 the chain is Extracellular; sequence KPSTAVCT. Cys-632 and Cys-721 are disulfide-bonded. A helical membrane pass occupies residues 634–651; the sequence is LRRLGLGTAFSVCYSALL. At 652–679 the chain is on the cytoplasmic side; sequence TKTNRIARIFGGAREGAQRPRFISPASQ. The tract at residues 677 to 685 is important for interaction with HTR2A; that stretch reads ASQVAICLA. The chain crosses the membrane as a helical span at residues 680–700; the sequence is VAICLALISGQLLIVAAWLVV. The Extracellular portion of the chain corresponds to 701–726; that stretch reads EAPGIGKETAPERREVVTLRCNHRDA. A helical membrane pass occupies residues 727 to 747; it reads SMLGSLAYNVLLIALCTLYAF. The Cytoplasmic portion of the chain corresponds to 748–760; sequence KTRKCPENFNEAK. The chain crosses the membrane as a helical span at residues 761–781; the sequence is FIGFTMYTTCIIWLAFLPIFY. At 782 to 798 the chain is on the extracellular side; that stretch reads VTSSDYRVQTTTMCVSV. Residues 799–819 form a helical membrane-spanning segment; it reads SLSGSVVLGCLFAPKLHIILF. The Cytoplasmic portion of the chain corresponds to 820–872; sequence QPQKNVVSHRAPTSRFGSAAPRASANLGQGSGSQLVPTVCNGREVVDSTTSSL.

The protein belongs to the G-protein coupled receptor 3 family. As to quaternary structure, forms heterodimers with GRM3 or GRM4. Interacts with GNAI1. Interacts with TAMALIN. Interacts with HTR2A. Detected in neurons in brain cortex (at protein level).

It localises to the cell membrane. Its subcellular location is the synapse. It is found in the cell projection. The protein resides in the dendrite. In terms of biological role, dimeric G protein-coupled receptor which is activated by the excitatory neurotransmitter L-glutamate. Plays critical roles in modulating synaptic transmission and neuronal excitability. Upon activation by glutamate, inhibits presynaptic calcium channels, reducing further glutamate release and dampening excitatory signaling. Mechanistically, ligand binding causes a conformation change that triggers signaling via guanine nucleotide-binding proteins (G proteins) and modulates the activity of down-stream effectors, such as adenylate cyclase. May mediate suppression of neurotransmission or may be involved in synaptogenesis or synaptic stabilization. The chain is Metabotropic glutamate receptor 2 (Grm2) from Mus musculus (Mouse).